A 104-amino-acid polypeptide reads, in one-letter code: Iron-sulfur cluster assembly protein CyaY (104 aa).

Belongs to the frataxin family.

Functionally, involved in iron-sulfur (Fe-S) cluster assembly. May act as a regulator of Fe-S biogenesis. This chain is Iron-sulfur cluster assembly protein CyaY, found in Vibrio parahaemolyticus serotype O3:K6 (strain RIMD 2210633).